A 561-amino-acid polypeptide reads, in one-letter code: MFLSTLFLVSLATCVICGNPSSPPVVDTAHGKVLGKHVNVEGFSQPVAVFLGIPFAKPPLGSLRFAPPQPAEPWSSVKNATTYPPMCSQDAARGQAVNDLITNRKEKIHLEFSEDCLYLNIYTPADFSKNSRLPVMVWIHGGGLKLGGASSFDGRALSAYENVVVVAIQYRLSIWGFFSTGDEHSRGNWGHLDQVAALHWVQDNIANFGGDPGSVTIFGESAGGYSVSILILSPLSKNLFHRAISESGVAFIPGMFTKDVRPITEQIAVTAGCKTTTSAVIVHCMRQKTEEELLEIMHKLNLYKLSLQGDTKNSDQFVTSVLDGVVLPKDPKEILAEKNFNTVPYIVGINKQECGWLLPTMTGFLPADVKLDKKKAIALLEQFASMTGIPEDIIPVAVEKYTKGSDDPDQIREGVLDAMGDVAFGVPSVIVSRGHRDTGAPTYMYEYQYYPSFSSPQRPKNVVGDHADDVYSVFGAPILREGASEEEINLSKMVMKFWANFARNGNPNGKGLPHWPKYDQKEGYLHIGGTTQQAQRLKEEEVTFWTQSLAKKQPQPYHNEL.

A signal peptide spans 1 to 17 (MFLSTLFLVSLATCVIC). A disulfide bridge links Cys87 with Cys116. Ser221 serves as the catalytic Acyl-ester intermediate. A disulfide bond links Cys273 and Cys284. Residues Glu353 and His466 each act as charge relay system in the active site. The Prevents secretion from ER signature appears at 558 to 561 (HNEL).

It belongs to the type-B carboxylesterase/lipase family. As to expression, expressed in liver, white and brown adipose tissue, kidney, intestine, adrenal, heart and ovary. Not detected in muscle, lung, testis, brain and spleen.

It is found in the lipid droplet. The protein localises to the cytoplasm. It localises to the cytosol. Its subcellular location is the endoplasmic reticulum. The protein resides in the microsome. It catalyses the reaction a carboxylic ester + H2O = an alcohol + a carboxylate + H(+). The enzyme catalyses all-trans-retinyl hexadecanoate + H2O = all-trans-retinol + hexadecanoate + H(+). Functionally, involved in the detoxification of xenobiotics and in the activation of ester and amide prodrugs. Hydrolyzes retinyl esters. Hydrolyzes p-nitrophenyl butyrate (PNPB), triacylglycerol and monoacylglycerol. Shows higher activity against PNPB, a short-chain fatty acid ester, than against triolein, a long-chain fatty acid ester. Shows no detectable activity against diacylglycerol, cholesterol ester or phospholipids. May play a role in adipocyte lipolysis. The sequence is that of Carboxylesterase 1F from Mus musculus (Mouse).